A 410-amino-acid chain; its full sequence is Arginine deiminase (410 aa).

The active-site Amidino-cysteine intermediate is Cys-400.

The protein belongs to the arginine deiminase family.

It localises to the cytoplasm. It carries out the reaction L-arginine + H2O = L-citrulline + NH4(+). It participates in amino-acid degradation; L-arginine degradation via ADI pathway; carbamoyl phosphate from L-arginine: step 1/2. The sequence is that of Arginine deiminase from Streptococcus uberis (strain ATCC BAA-854 / 0140J).